The primary structure comprises 491 residues: GTPase Der (491 aa).

The EngA-type G 1 domain occupies 3–166 (PVIALVGRPN…AALGIFPRDD (164 aa)). GTP contacts are provided by residues 9–16 (GRPNVGKS), 56–60 (DTGGI), and 118–121 (NKVD). The disordered stretch occupies residues 164–191 (RDDEGEEGEGEAEVVAEGEEPKRVPGPS). Acidic residues predominate over residues 166-181 (DEGEEGEGEAEVVAEG). The span at 182–191 (EEPKRVPGPS) shows a compositional bias: basic and acidic residues. One can recognise an EngA-type G 2 domain in the interval 196 to 369 (IKIAIIGRPN…SVQAAFQSAV (174 aa)). Residues 202–209 (GRPNVGKS), 249–253 (DTAGV), and 314–317 (NKWD) contribute to the GTP site. Residues 370 to 454 (TRWPTSRLTR…PIRIEYKGGD (85 aa)) enclose the KH-like domain. The span at 452 to 464 (GGDNPYEGKKNSL) shows a compositional bias: basic and acidic residues. Positions 452 to 491 (GGDNPYEGKKNSLTERQVNKKRRLMSHHKKAEKKRRDKKR) are disordered. The segment covering 470–491 (NKKRRLMSHHKKAEKKRRDKKR) has biased composition (basic residues).

It belongs to the TRAFAC class TrmE-Era-EngA-EngB-Septin-like GTPase superfamily. EngA (Der) GTPase family. Associates with the 50S ribosomal subunit.

Its function is as follows. GTPase that plays an essential role in the late steps of ribosome biogenesis. This chain is GTPase Der, found in Azotobacter vinelandii (strain DJ / ATCC BAA-1303).